We begin with the raw amino-acid sequence, 360 residues long: UDP-N-acetylglucosamine--N-acetylmuramyl-(pentapeptide) pyrophosphoryl-undecaprenol N-acetylglucosamine transferase (360 aa).

UDP-N-acetyl-alpha-D-glucosamine contacts are provided by residues 17–19, Asn-130, Arg-166, Ser-200, Ile-247, and Gln-291; that span reads TAG.

Belongs to the glycosyltransferase 28 family. MurG subfamily.

The protein localises to the cell membrane. It carries out the reaction di-trans,octa-cis-undecaprenyl diphospho-N-acetyl-alpha-D-muramoyl-L-alanyl-D-glutamyl-meso-2,6-diaminopimeloyl-D-alanyl-D-alanine + UDP-N-acetyl-alpha-D-glucosamine = di-trans,octa-cis-undecaprenyl diphospho-[N-acetyl-alpha-D-glucosaminyl-(1-&gt;4)]-N-acetyl-alpha-D-muramoyl-L-alanyl-D-glutamyl-meso-2,6-diaminopimeloyl-D-alanyl-D-alanine + UDP + H(+). It participates in cell wall biogenesis; peptidoglycan biosynthesis. In terms of biological role, cell wall formation. Catalyzes the transfer of a GlcNAc subunit on undecaprenyl-pyrophosphoryl-MurNAc-pentapeptide (lipid intermediate I) to form undecaprenyl-pyrophosphoryl-MurNAc-(pentapeptide)GlcNAc (lipid intermediate II). In Corynebacterium efficiens (strain DSM 44549 / YS-314 / AJ 12310 / JCM 11189 / NBRC 100395), this protein is UDP-N-acetylglucosamine--N-acetylmuramyl-(pentapeptide) pyrophosphoryl-undecaprenol N-acetylglucosamine transferase.